A 115-amino-acid polypeptide reads, in one-letter code: Putative UPF0320 protein YKL225W (115 aa).

This sequence belongs to the UPF0320 family.

The chain is Putative UPF0320 protein YKL225W from Saccharomyces cerevisiae (strain ATCC 204508 / S288c) (Baker's yeast).